The primary structure comprises 620 residues: MNLKNGLLLFILFLDCVFFKVESKCVKGCDVALASYYIIPSIQLRNISNFMQSKIVLTNSFDVIMSYNRDVVFDKSGLISYTRINVPFPCECIGGEFLGHVFEYTTKEGDDYDLIANTYYASLTTVELLKKFNSYDPNHIPVKAKINVTVICSCGNSQISKDYGLFVTYPLRSDDTLAKIATKAGLDEGLIQNFNQDANFSIGSGIVFIPGRDQNGHFFPLYSRTGIAKGSAVGIAMAGIFGLLLFVIYIYAKYFQKKEEEKTKLPQTSRAFSTQDASGSAEYETSGSSGHATGSAAGLTGIMVAKSTEFTYQELAKATNNFSLDNKIGQGGFGAVYYAELRGEKTAIKKMDVQASSEFLCELKVLTHVHHLNLVRLIGYCVEGSLFLVYEHIDNGNLGQYLHGIGTEPLPWSSRVQIALDSARGLEYIHEHTVPVYIHRDVKSANILIDKNLRGKVADFGLTKLIEVGNSTLHTRLVGTFGYMPPEYAQYGDVSPKIDVYAFGVVLYELITAKNAVLKTGESVAESKGLVQLFEEALHRMDPLEGLRKLVDPRLKENYPIDSVLKMAQLGRACTRDNPLLRPSMRSIVVALMTLSSPTEDCDDDSSYENQSLINLLSTR.

Residues M1–S23 form the signal peptide. Over K24 to S231 the chain is Extracellular. Intrachain disulfides connect C25–C92, C29–C154, and C90–C152. N-linked (GlcNAc...) asparagine glycosylation occurs at N46. One can recognise a LysM 1; degenerate domain in the interval N46–V72. LysM domains are found at residues F102–V148 and V167–P210. Residues E108–L114 and D136–V142 contribute to the chitin site. N-linked (GlcNAc...) asparagine glycans are attached at residues N147 and N199. A helical transmembrane segment spans residues A232–A252. Topologically, residues K253–R620 are cytoplasmic. Over residues L265–S278 the composition is skewed to polar residues. The interval L265–A292 is disordered. S269 and S273 each carry phosphoserine. One can recognise a Protein kinase domain in the interval F322–L595. ATP contacts are provided by residues I328–V336 and K349. D441 (proton acceptor) is an active-site residue.

It belongs to the protein kinase superfamily. Ser/Thr protein kinase family. In terms of assembly, forms homodimers and homooligomers. Forms heteromeric complexes with NFP at the cell periphery in nodules. Interacts with PUB1. In terms of processing, autophosphorylated. In terms of tissue distribution, expressed in the epidermal and root hair cells of the developing root hair zone during nonsymbiotic growth. Accumulates in roots and nodules during symbiotic growth with rhizobia. Localized at the cell periphery in a narrow zone of about two cell layers (e.g. L1/L2 zone) at the nodule apex upon infection by rhizobia, from the meristem to the infection zone (at protein level).

It localises to the cell membrane. Its subcellular location is the vacuole lumen. It carries out the reaction L-seryl-[protein] + ATP = O-phospho-L-seryl-[protein] + ADP + H(+). The catalysed reaction is L-threonyl-[protein] + ATP = O-phospho-L-threonyl-[protein] + ADP + H(+). Functionally, putative receptor for S.meliloti Nod factor signals essential for the establishment of the nitrogen-fixing, root nodule symbiosis with S.meliloti. Involved in the control of root hair curling after S.meliloti infection, probably by modulating the reorganization of the microtubular cytoskeleton in epidermal and cortical cells. Regulates a subset of Nod factor-induced genes. The polypeptide is LysM domain receptor-like kinase 3 (Medicago truncatula (Barrel medic)).